The sequence spans 150 residues: Large ribosomal subunit protein bL9 (150 aa).

The protein belongs to the bacterial ribosomal protein bL9 family.

Functionally, binds to the 23S rRNA. This chain is Large ribosomal subunit protein bL9, found in Burkholderia cenocepacia (strain HI2424).